The sequence spans 7180 residues: Replicase polyprotein 1ab (7180 aa).

Residues 54-196 (LVNHVRVDCS…PWSILLRKGG (143 aa)) form the CoV Nsp1 globular domain. A BetaCoV Nsp1 C-terminal domain is found at 217–247 (FNVEDACEEVHLNPRGKYSCKAYALLRGYRG). Positions 251 to 513 (ILFVDQYGCD…AICRFLYMDY (263 aa)) constitute a CoV Nsp2 N-terminal domain. Zn(2+) contacts are provided by C390, C395, C411, and C414. Residues 390 to 414 (CCGDTCGFRGWVPGNMMDGFPCPGC) are C4. The CoV Nsp2 middle domain occupies 518–706 (CGNLEQRAIL…VDKFKTFFKV (189 aa)). The 107-residue stretch at 726 to 832 (SNRVCLAGSK…LDQCWRFPCA (107 aa)) folds into the CoV Nsp2 C-terminal domain. Residues 834–946 (KKVVFNDKPK…MYCSFSAPDE (113 aa)) form the Ubiquitin-like 1 domain. In terms of domain architecture, Peptidase C16 1 spans 1083–1320 (AFDAIYSETL…IAQLYGSCIT (238 aa)). The active-site For PL1-PRO activity is C1120. Zn(2+)-binding residues include C1197, C1200, C1223, and C1225. The C4-type 1 zinc-finger motif lies at 1197-1225 (CLKCGMELKLQGLDAVFFYGDVVSHMCKC). Residues H1271 and D1282 each act as for PL1-PRO activity in the active site. Residues 1321 to 1481 (PNVCFVKGDV…VIEKCQVTSV (161 aa)) enclose the Macro domain. The DPUP domain occupies 1536 to 1608 (DDARVFVQAN…VSQIRALLAN (73 aa)). The region spanning 1607–1662 (ANKVDVLCTVDGVNFRSCCVAEGEVFGKTLGSVFCDGINVTKVRCSAIHKGKVFFQ) is the Ubiquitin-like 2 domain. The 260-residue stretch at 1677–1936 (AFGFDEPQLL…CVAYKPDLSQ (260 aa)) folds into the Peptidase C16 2 domain. The active-site For PL2-PRO activity is C1715. Zn(2+) is bound by residues C1793, C1795, C1827, and C1829. Residues 1793-1829 (CKCGVKQEQRKGVDAVMHFGTLDKSGLVKGYNIACTC) form a C4-type 2 zinc finger. Active-site for PL2-PRO activity residues include H1872 and D1886. The Nucleic acid-binding domain maps to 1950-2051 (IKAQFRTFEK…TYFNRPSVVC (102 aa)). Positions 2106–2259 (SVEDQIVMEA…TDNKVIYTTE (154 aa)) constitute a G2M domain. 3 helical membrane passes run 2228–2248 (AIACYGAVKWFLLYCFSWIKF), 2289–2309 (FFLVATVFLLWFNFLYANVIL), and 2320–2340 (LPMFVGQIVAWVKTTFGVLTI). Residues 2228–2465 (AIACYGAVKW…FTLLRFYIVV (238 aa)) form an HD1 region. The 3Ecto domain maps to 2325–2386 (GQIVAWVKTT…SINVVQHVVD (62 aa)). 2 disulfide bridges follow: C2341–C2365 and C2356–C2362. Transmembrane regions (helical) follow at residues 2403–2423 (LVIGYSLYTVCFYPLFVLVGM) and 2445–2465 (LFVFVANMLPAFTLLRFYIVV). Positions 2473-2563 (CLCRHVMYGC…ELKRPVNPTD (91 aa)) are Y1. The 368-residue stretch at 2473–2840 (CLCRHVMYGC…LTTPFSLKGG (368 aa)) folds into the CoV Nsp3 Y domain. The Zn(2+) site is built by H2477, C2482, C2487, C2490, C2523, H2526, C2530, and C2533. Residues 2477 to 2490 (HVMYGCSKPGCLFC) are ZF1. Residues 2523–2533 (CTKHQWNCLNC) form a ZF2 region. The tract at residues 2564–2656 (SAYYSVIEVK…MVEKKLITTA (93 aa)) is Y2. Positions 2564 to 2840 (SAYYSVIEVK…LTTPFSLKGG (277 aa)) are coV-Y. Residues 2657–2739 (NTGLSVSRTM…KSVMAAVNAG (83 aa)) form a Y3 region. Residues 2740–2840 (VEVTDESCNN…LTTPFSLKGG (101 aa)) form a Y4 region. The next 6 helical transmembrane spans lie at 2846–2866 (VLQWLFVANLICFIVLWALMP), 3099–3119 (AFDLIHQVLGGLVQPIDFFAL), 3121–3141 (ASSVAGAILAIIVVLAFYYLI), 3153–3173 (VVVINVIVWCINFLMLFVFQV), 3180–3200 (LYACFYFYTTLYFPSEISVVM), and 3205–3225 (LVMYGAIMPLWFCITYVAVVV). Positions 2846–3225 (VLQWLFVANL…FCITYVAVVV (380 aa)) are HD2. One can recognise a Nsp4C domain in the interval 3239–3336 (IGTDVRSDGT…TASVTTSFLQ (98 aa)). Residues 3337-3639 (SGIVKMVSPT…YQQLAGVKLQ (303 aa)) form the Peptidase C30 domain. Residues H3377 and C3481 each act as for 3CL-PRO activity in the active site. Helical transmembrane passes span 3648 to 3668 (GTCCWILASTFLFCSIISAFV), 3678 to 3698 (THMLGVTLCALCFVIFAMLLI), 3705 to 3725 (LTMYIMPVLCTLFYTNYLVVG), 3748 to 3768 (TYMDEVLYGVVLLVAMVFVTM), 3775 to 3795 (VFSTMFLVGRLVSLVSMWYFG), 3802 to 3822 (VLLFLTSLFGTYTWTTMLSLA), and 3846 to 3866 (LVLLSYLCIGYVCCCYWGVLS). The tract at residues 3648 to 3866 (GTCCWILAST…VCCCYWGVLS (219 aa)) is HD3. The region spanning 3928–4016 (SRLTDVKCAN…DYVRDNTVLQ (89 aa)) is the RdRp Nsp7 cofactor domain. One can recognise a RdRp Nsp8 cofactor domain in the interval 4017-4213 (ALQSEFVNMA…HNEVSTVVLQ (197 aa)). In terms of domain architecture, Nsp9 ssRNA-binding spans 4214 to 4323 (NNELMPQKLR…GTLSSTVRLQ (110 aa)). One can recognise an ExoN/MTase coactivator domain in the interval 4324–4461 (AGTATEYASN…CVGTGSQFQS (138 aa)). Zn(2+) is bound by residues C4397, C4400, H4406, C4413, C4439, C4442, C4450, and C4452. 2 zinc fingers span residues 4397 to 4413 (CIYCRSRVEHPDVDGLC) and 4439 to 4452 (CQVCGFWRDGSCSC). Residues 4466 to 4721 (FLNRVRGTSV…DSELFVNGTY (256 aa)) enclose the NiRAN domain. Mn(2+) contacts are provided by N4669 and D4678. A Nsp12 Interface domain is found at 4722–4820 (REFDLVQYDF…MNMDVDTHRY (99 aa)). Residues H4751, C4757, C4762, C4766, and C4943 each coordinate Zn(2+). Positions 4821–5388 (RLSLKDLLLY…NMYLRSAVMQ (568 aa)) constitute a Nsp12 RNA-dependent RNA polymerase domain. The rdRp Fingers N-ter stretch occupies residues 4823 to 5037 (SLKDLLLYAA…HQKCLKSIAA (215 aa)). The tract at residues 5038–5076 (TRGVPVVIGTTKFYGGWDDMLRRLIKDVDSPVLMGWDYP) is rdRp Palm N-ter. A RdRp catalytic domain is found at 5068 to 5230 (PVLMGWDYPK…CYNSEFASKG (163 aa)). The tract at residues 5077-5135 (KCDRAMPNILRIVSSLVLARKHDSCCSHTDRFYRLANECAQVLGEIVMCGGCYYVKPGG) is rdRp Fingers C-ter. Zn(2+) contacts are provided by H5098, C5101, and C5102. The interval 5136-5271 (TSSGDATTAF…EKGPHEFCSQ (136 aa)) is rdRp Palm C-ter. Residues S5215, D5216, and D5217 contribute to the active site. The tract at residues 5272–5388 (HTMLVKMDGD…NMYLRSAVMQ (117 aa)) is rdRp Thumb. The 113-residue stretch at 5389-5501 (SVGACVVCSS…EDFNKIASCK (113 aa)) folds into the CV ZBD domain. C5393, C5396, C5404, C5407, C5414, C5417, H5421, H5427, C5438, C5443, C5460, and H5463 together coordinate Zn(2+). One can recognise a (+)RNA virus helicase ATP-binding domain in the interval 5644 to 5825 (SVPETFQNNV…MCCLGPDIFL (182 aa)). 5669 to 5676 (GPPGTGKS) contributes to the ATP binding site. Residues 5826–6003 (GTCYRCPKEI…FKDCSKSYVG (178 aa)) enclose the (+)RNA virus helicase C-terminal domain. Residues 6057–6272 (LFITRDEAIK…RCLAVHDCFC (216 aa)) enclose the ExoN domain. Active-site residues include D6075, E6077, and E6176. Residues C6192, C6195, C6211, H6214, H6242, C6246, and H6249 each contribute to the Zn(2+) site. Active-site residues include H6253 and D6258. Residue C6264 participates in Zn(2+) binding. An N7-MTase domain is found at 6281-6507 (YPIISNEVSV…NLWNTFTRLQ (227 aa)). Residue 6316 to 6322 (DIGNPKG) coordinates S-adenosyl-L-methionine. The tract at residues 6394–6408 (CNGGSLYVNKHAFHT) is gpppA-binding. Zn(2+)-binding residues include C6432, C6453, C6464, and H6467. The Nsp15 N-terminal oligomerization domain maps to 6508–6568 (SLENVVYNLV…NVAVELFAER (61 aa)). The 121-residue stretch at 6569–6689 (SIRPHPELKL…FAMRRDGDDV (121 aa)) folds into the AV-Nsp11N/CoV-Nsp15M domain. One can recognise a NendoU domain in the interval 6739–6878 (SPRSEMEKDF…NEEKVMTFYP (140 aa)). One can recognise a Nidovirus-type SAM-dependent 2'-O-MTase domain in the interval 6883–7177 (AADWKPGYVM…KEVFVGDSLV (295 aa)). Catalysis depends on residues K6927, D7011, K7051, and E7084.

It belongs to the coronaviruses polyprotein 1ab family. Interacts with host PHB and PHB2. As to quaternary structure, interacts with papain-like protease nsp3 and non-structural protein 6. In terms of assembly, monomer. Homodimer. Only the homodimer shows catalytic activity. Interacts with nsp8 and nsp12 to form the replication-transcription complex (RTC): nsp12, nsp7, two subunits of nsp8, and up to two subunits of nsp13. As to quaternary structure, interacts with nsp7, nsp13 and nsp12 to form the replication-transcription complex (RTC): nsp12, nsp7, two subunits of nsp8, and up to two subunits of nsp13. In terms of assembly, interacts with nsp12. Interacts with proofreading exoribonuclease nsp14 and 2'-O-methyltransferase nsp16; these interactions enhance nsp14 and nsp16 enzymatic activities. As to quaternary structure, interacts with nsp7 and nsp8 to form the replication-transcription complex (RTC): nsp12, nsp7, two subunits of nsp8, and up to two subunits of nsp13. Interacts with nsp9. In terms of assembly, interacts with nsp8 to form the replication-transcription complex (RTC): nsp12, nsp7, two subunits of nsp8, and up to two subunits of nsp13. Requires Mn(2+) as cofactor. The cofactor is Mg(2+). Specific enzymatic cleavages in vivo by its own proteases yield mature proteins. 3CL-PRO and PL-PRO proteinases are autocatalytically processed.

The protein localises to the host membrane. It is found in the host cytoplasm. It localises to the host perinuclear region. The protein resides in the host endoplasmic reticulum-Golgi intermediate compartment. The catalysed reaction is RNA(n) + a ribonucleoside 5'-triphosphate = RNA(n+1) + diphosphate. The enzyme catalyses ATP + H2O = ADP + phosphate + H(+). It catalyses the reaction Thiol-dependent hydrolysis of ester, thioester, amide, peptide and isopeptide bonds formed by the C-terminal Gly of ubiquitin (a 76-residue protein attached to proteins as an intracellular targeting signal).. It carries out the reaction a 5'-end (N(7)-methyl 5'-triphosphoguanosine)-ribonucleoside in mRNA + S-adenosyl-L-methionine = a 5'-end (N(7)-methyl 5'-triphosphoguanosine)-(2'-O-methyl-ribonucleoside) in mRNA + S-adenosyl-L-homocysteine + H(+). The catalysed reaction is uridylyl-uridylyl-ribonucleotide-RNA = a 3'-end uridylyl-2',3'-cyclophospho-uridine-RNA + a 5'-end dephospho-ribonucleoside-RNA. The enzyme catalyses a 5'-end diphospho-ribonucleoside in mRNA + GTP + H(+) = a 5'-end (5'-triphosphoguanosine)-ribonucleoside in mRNA + diphosphate. It catalyses the reaction a 5'-end (5'-triphosphoguanosine)-ribonucleoside in mRNA + S-adenosyl-L-methionine = a 5'-end (N(7)-methyl 5'-triphosphoguanosine)-ribonucleoside in mRNA + S-adenosyl-L-homocysteine. In terms of biological role, the replicase polyprotein of coronaviruses is a multifunctional protein: it contains the activities necessary for the transcription of negative stranded RNA, leader RNA, subgenomic mRNAs and progeny virion RNA as well as proteinases responsible for the cleavage of the polyprotein into functional products. Its function is as follows. Inhibits host translation by interacting with the 40S ribosomal subunit. The nsp1-40S ribosome complex further induces an endonucleolytic cleavage near the 5'UTR of host mRNAs, targeting them for degradation. Viral mRNAs are not susceptible to nsp1-mediated endonucleolytic RNA cleavage thanks to the presence of a 5'-end leader sequence and are therefore protected from degradation. By suppressing host gene expression, nsp1 facilitates efficient viral gene expression in infected cells and evasion from host immune response. Functionally, may play a role in the modulation of host cell survival signaling pathway by interacting with host PHB and PHB2. Indeed, these two proteins play a role in maintaining the functional integrity of the mitochondria and protecting cells from various stresses. Responsible for the cleavages located at the N-terminus of the replicase polyprotein. In addition, PL-PRO possesses a deubiquitinating/deISGylating activity and processes both 'Lys-48'- and 'Lys-63'-linked polyubiquitin chains from cellular substrates. Participates together with nsp4 in the assembly of virally-induced cytoplasmic double-membrane vesicles necessary for viral replication. Antagonizes innate immune induction of type I interferon by blocking the phosphorylation, dimerization and subsequent nuclear translocation of host IRF3. Also prevents host NF-kappa-B signaling. In terms of biological role, participates in the assembly of virally-induced cytoplasmic double-membrane vesicles necessary for viral replication. Its function is as follows. Cleaves the C-terminus of replicase polyprotein at 11 sites. Recognizes substrates containing the core sequence [ILMVF]-Q-|-[SGACN]. Also able to bind an ADP-ribose-1''-phosphate (ADRP). Functionally, plays a role in the initial induction of autophagosomes from host endoplasmic reticulum. Later, limits the expansion of these phagosomes that are no longer able to deliver viral components to lysosomes. Forms a hexadecamer with nsp8 (8 subunits of each) that may participate in viral replication by acting as a primase. Alternatively, may synthesize substantially longer products than oligonucleotide primers. In terms of biological role, forms a hexadecamer with nsp7 (8 subunits of each) that may participate in viral replication by acting as a primase. Alternatively, may synthesize substantially longer products than oligonucleotide primers. Its function is as follows. Forms a primer, NSP9-pU, which is utilized by the polymerase for the initiation of RNA chains. Interacts with ribosome signal recognition particle RNA (SRP). Together with NSP8, suppress protein integration into the cell membrane, thereby disrupting host immune defenses. Functionally, plays a pivotal role in viral transcription by stimulating both nsp14 3'-5' exoribonuclease and nsp16 2'-O-methyltransferase activities. Therefore plays an essential role in viral mRNAs cap methylation. RNA-directed RNA polymerase that catalyzes the transcription of viral genomic and subgenomic RNAs. Acts in complex with nsp7 and nsp8 to transcribe both the minus and positive strands of genomic RNA. The kinase-like NiRAN domain of NSP12 attaches one or more nucleotides to the amino terminus of NSP9, forming a covalent RNA-protein intermediate that serves as transcription/replication primer. Subgenomic RNAs (sgRNAs) are formed by discontinuous transcription: The polymerase has the ability to pause at transcription-regulating sequences (TRS) and jump to the leader TRS, resulting in a major deletion. This creates a series of subgenomic RNAs that are replicated, transcribed and translated. In addition, Nsp12 is a subunit of the viral RNA capping enzyme that catalyzes the RNA guanylyltransferase reaction for genomic and sub-genomic RNAs. Subsequently, the NiRAN domain transfers RNA to GDP, and forms the core cap structure GpppA-RNA. In terms of biological role, multi-functional protein with a zinc-binding domain in N-terminus displaying RNA and DNA duplex-unwinding activities with 5' to 3' polarity. Activity of helicase is dependent on magnesium. Its function is as follows. Plays a role in viral RNA synthesis through two distinct activities. The N7-guanine methyltransferase activity plays a role in the formation of the cap structure GpppA-RNA. The proofreading exoribonuclease reduces the sensitivity of the virus to RNA mutagens during replication. This activity acts on both ssRNA and dsRNA in a 3'-5' direction. Functionally, plays a role in viral transcription/replication and prevents the simultaneous activation of host cell dsRNA sensors, such as MDA5/IFIH1, OAS, and PKR. Acts by degrading the 5'-polyuridines generated during replication of the poly(A) region of viral genomic and subgenomic RNAs. Catalyzes a two-step reaction in which a 2'3'-cyclic phosphate (2'3'-cP) is first generated by 2'-O transesterification, which is then hydrolyzed to a 3'-phosphate (3'-P). If not degraded, poly(U) RNA would hybridize with poly(A) RNA tails and activate host dsRNA sensors. 2'-O-methyltransferase: Methyltransferase that mediates mRNA cap 2'-O-ribose methylation to the 5'-cap structure of viral mRNAs. N7-methyl guanosine cap is a prerequisite for binding of nsp16. Therefore plays an essential role in viral mRNAs cap methylation which is essential to evade immune system. In Mus musculus (Mouse), this protein is Replicase polyprotein 1ab (rep).